Here is a 325-residue protein sequence, read N- to C-terminus: Phenylalanine--tRNA ligase alpha subunit (325 aa).

Glu251 provides a ligand contact to Mg(2+).

It belongs to the class-II aminoacyl-tRNA synthetase family. Phe-tRNA synthetase alpha subunit type 1 subfamily. Tetramer of two alpha and two beta subunits. Requires Mg(2+) as cofactor.

The protein localises to the cytoplasm. It carries out the reaction tRNA(Phe) + L-phenylalanine + ATP = L-phenylalanyl-tRNA(Phe) + AMP + diphosphate + H(+). The sequence is that of Phenylalanine--tRNA ligase alpha subunit (pheS) from Thermotoga maritima (strain ATCC 43589 / DSM 3109 / JCM 10099 / NBRC 100826 / MSB8).